Consider the following 184-residue polypeptide: Large ribosomal subunit protein uL6 (184 aa).

Belongs to the universal ribosomal protein uL6 family. As to quaternary structure, part of the 50S ribosomal subunit.

This protein binds to the 23S rRNA, and is important in its secondary structure. It is located near the subunit interface in the base of the L7/L12 stalk, and near the tRNA binding site of the peptidyltransferase center. This is Large ribosomal subunit protein uL6 from Thermococcus kodakarensis (strain ATCC BAA-918 / JCM 12380 / KOD1) (Pyrococcus kodakaraensis (strain KOD1)).